The following is a 314-amino-acid chain: MKHLLSIADLDRESAVELLDEAERFEQALLGREVRKLPTLRGRTVMTVFFENSTRTRVSFEVAGKWMSADVINVSASSSSVSKGESLRDTAMTLRAAGADALIVRHPASGAAHQIAKWTGAADDGGPAVINAGDGTHEHPTQALLDALTLRQRLGDIEGKRIAIVGDILHSRVARSNALLLSMLGAEVVLVAPPTLLPVGAHTWPVTVSHSLDAELPGLDAVLMLRVQAERMNGGFFPSQREYSINYGLSEKRLAMLADHAVVLHPGPMLRGMEIASAVADSSKTAVLQQVTNGVHMRMAVLFRLLVGSEDGAL.

Arginine 55 and threonine 56 together coordinate carbamoyl phosphate. An L-aspartate-binding site is contributed by lysine 83. Residues arginine 105, histidine 139, and glutamine 142 each contribute to the carbamoyl phosphate site. Residues arginine 172 and arginine 226 each coordinate L-aspartate. Positions 267 and 268 each coordinate carbamoyl phosphate.

It belongs to the aspartate/ornithine carbamoyltransferase superfamily. ATCase family. In terms of assembly, heterododecamer (2C3:3R2) of six catalytic PyrB chains organized as two trimers (C3), and six regulatory PyrI chains organized as three dimers (R2).

It catalyses the reaction carbamoyl phosphate + L-aspartate = N-carbamoyl-L-aspartate + phosphate + H(+). The protein operates within pyrimidine metabolism; UMP biosynthesis via de novo pathway; (S)-dihydroorotate from bicarbonate: step 2/3. Its function is as follows. Catalyzes the condensation of carbamoyl phosphate and aspartate to form carbamoyl aspartate and inorganic phosphate, the committed step in the de novo pyrimidine nucleotide biosynthesis pathway. This chain is Aspartate carbamoyltransferase catalytic subunit, found in Rhodococcus erythropolis (strain PR4 / NBRC 100887).